The primary structure comprises 438 residues: chitinase-like effector (438 aa).

The first 23 residues, Met1–Ala23, serve as a signal peptide directing secretion. The 384-residue stretch at Phe54–Ser437 folds into the GH18 domain. Residue Trp416 participates in chitin binding.

Belongs to the glycosyl hydrolase 18 family.

The protein resides in the secreted. In terms of biological role, catalytically impaired chitinase that binds efficiently to chitin, but not to chitosan, xylan, or cellulose. Despite the lack of chitinolytic activity, retains substrate binding specificity and acts as an effector to prevent chitin-triggered immunity by sequestering immunogenic chitin fragments. Does not function in the protection of fungal cell wall against plant hydrolytic enzymes. In Moniliophthora perniciosa (Witches'-broom disease fungus), this protein is chitinase-like effector.